Reading from the N-terminus, the 222-residue chain is Histidine biosynthesis bifunctional protein HisIE (222 aa).

The segment at 1–128 (MQPLSPAFID…SLTLPPPMDA (128 aa)) is phosphoribosyl-AMP cyclohydrolase. The tract at residues 129–222 (CSELFRVIDQ…ANRRGAPRRN (94 aa)) is phosphoribosyl-ATP pyrophosphohydrolase.

It in the N-terminal section; belongs to the PRA-CH family. In the C-terminal section; belongs to the PRA-PH family.

The protein localises to the cytoplasm. The enzyme catalyses 1-(5-phospho-beta-D-ribosyl)-ATP + H2O = 1-(5-phospho-beta-D-ribosyl)-5'-AMP + diphosphate + H(+). It carries out the reaction 1-(5-phospho-beta-D-ribosyl)-5'-AMP + H2O = 1-(5-phospho-beta-D-ribosyl)-5-[(5-phospho-beta-D-ribosylamino)methylideneamino]imidazole-4-carboxamide. The protein operates within amino-acid biosynthesis; L-histidine biosynthesis; L-histidine from 5-phospho-alpha-D-ribose 1-diphosphate: step 2/9. It functions in the pathway amino-acid biosynthesis; L-histidine biosynthesis; L-histidine from 5-phospho-alpha-D-ribose 1-diphosphate: step 3/9. In Prochlorococcus marinus (strain MIT 9313), this protein is Histidine biosynthesis bifunctional protein HisIE.